A 468-amino-acid chain; its full sequence is 3-isopropylmalate dehydratase large subunit (468 aa).

Residues Cys349, Cys409, and Cys412 each coordinate [4Fe-4S] cluster.

Belongs to the aconitase/IPM isomerase family. LeuC type 1 subfamily. Heterodimer of LeuC and LeuD. [4Fe-4S] cluster is required as a cofactor.

The catalysed reaction is (2R,3S)-3-isopropylmalate = (2S)-2-isopropylmalate. The protein operates within amino-acid biosynthesis; L-leucine biosynthesis; L-leucine from 3-methyl-2-oxobutanoate: step 2/4. Its function is as follows. Catalyzes the isomerization between 2-isopropylmalate and 3-isopropylmalate, via the formation of 2-isopropylmaleate. The protein is 3-isopropylmalate dehydratase large subunit of Shewanella baltica (strain OS185).